We begin with the raw amino-acid sequence, 82 residues long: Putative membrane protein insertion efficiency factor (82 aa).

The protein belongs to the UPF0161 family.

It is found in the cell inner membrane. In terms of biological role, could be involved in insertion of integral membrane proteins into the membrane. The polypeptide is Putative membrane protein insertion efficiency factor (Colwellia psychrerythraea (strain 34H / ATCC BAA-681) (Vibrio psychroerythus)).